We begin with the raw amino-acid sequence, 438 residues long: MDSWTSPDVPALPFTAEGPRVHDTARGAITPLTPRPGQEAGLYVCGITPYDATHLGHAATYLTFDLVNRALRAAGHPVRFVQNVTDVDEPLLERAERDGVHWEELASREIQLFRDDMAALRIIAPDAYVGAVEGIPSDVAAIRAMLESGRAYRVPAEDAAADAGESPADVYLDLAQVPTFGEVSHWTPTQMMEVFADRGGDPDRAGKRDRLDPLLWRAHREGEPHWEGGSLGAGRPGWHIECTTIARDHLGTPFLVQGGGDDLVFPHHEMSAAQTRALTDDAFAEHYVHQAMVGLDGEKMSKSKGNLVLVSRLRAAGEDPAAIRLALLSQHYRTAWEWTDAHLEAARQRLDRWRHAAQTATASPSTADAEDAPAGDAVARQLAERIADDLDAPGALAVVDRWADAVLGEQTGAAAAAARAEARGVRTAVDALLGIDLG.

The tract at residues Met-1–Gly-27 is disordered. Cys-45 lines the Zn(2+) pocket. L-cysteinyl-5'-AMP is bound by residues Cys-45–Thr-48, Thr-60, and Asn-83–Thr-85. Positions Ile-47–His-57 match the 'HIGH' region motif. A 'ERGGDP' region motif is present at residues Asp-197–Pro-202. Position 238 (Trp-238) interacts with L-cysteinyl-5'-AMP. Cys-242 is a Zn(2+) binding site. An L-cysteinyl-5'-AMP-binding site is contributed by Gly-260 to Asp-262. Residue His-267 coordinates Zn(2+). Val-293 provides a ligand contact to L-cysteinyl-5'-AMP. Positions Lys-299–Ser-303 match the 'KMSKS' region motif.

Belongs to the class-I aminoacyl-tRNA synthetase family. MshC subfamily. In terms of assembly, monomer. The cofactor is Zn(2+).

It carries out the reaction 1D-myo-inositol 2-amino-2-deoxy-alpha-D-glucopyranoside + L-cysteine + ATP = 1D-myo-inositol 2-(L-cysteinylamino)-2-deoxy-alpha-D-glucopyranoside + AMP + diphosphate + H(+). Catalyzes the ATP-dependent condensation of GlcN-Ins and L-cysteine to form L-Cys-GlcN-Ins. The sequence is that of L-cysteine:1D-myo-inositol 2-amino-2-deoxy-alpha-D-glucopyranoside ligase from Kytococcus sedentarius (strain ATCC 14392 / DSM 20547 / JCM 11482 / CCUG 33030 / NBRC 15357 / NCTC 11040 / CCM 314 / 541) (Micrococcus sedentarius).